The following is a 904-amino-acid chain: Eukaryotic translation initiation factor 3 subunit C (904 aa).

2 disordered regions span residues 1–38 (MSRF…EEED) and 156–290 (FRES…TSEK). The segment covering 22–32 (IQRQTAPQFTF) has biased composition (polar residues). The segment covering 161–183 (DAADDEDEEEEKKEEEESDDEEA) has biased composition (acidic residues). The segment covering 194–206 (FKKDTVEKVKVEK) has biased composition (basic and acidic residues). The span at 207–232 (DDDDSDDSIDWGQDSDSDESSSEEEA) shows a compositional bias: acidic residues. Residues 237-247 (IRERFLKRPEK) show a composition bias toward basic and acidic residues. A compositionally biased stretch (basic residues) spans 257-272 (KEKKKTKETKDSRKKK). In terms of domain architecture, PCI spans 636–812 (FHMHINLELL…ETVVLHRSEP (177 aa)). Residues 847-904 (RGGNQGYNRDRQNYRNQNQNRENWNNNRRQDRGNRNRNQNRDREQREQHRVEFEEKAE) form a disordered region. Low complexity predominate over residues 860–873 (YRNQNQNRENWNNN). Positions 874–904 (RRQDRGNRNRNQNRDREQREQHRVEFEEKAE) are enriched in basic and acidic residues.

It belongs to the eIF-3 subunit C family. In terms of assembly, component of the eukaryotic translation initiation factor 3 (eIF-3) complex.

The protein resides in the cytoplasm. Component of the eukaryotic translation initiation factor 3 (eIF-3) complex, which is involved in protein synthesis of a specialized repertoire of mRNAs and, together with other initiation factors, stimulates binding of mRNA and methionyl-tRNAi to the 40S ribosome. The eIF-3 complex specifically targets and initiates translation of a subset of mRNAs involved in cell proliferation. The polypeptide is Eukaryotic translation initiation factor 3 subunit C (Culex quinquefasciatus (Southern house mosquito)).